Reading from the N-terminus, the 215-residue chain is Peroxiredoxin 1 (215 aa).

The region spanning 2–158 is the Thioredoxin domain; that stretch reads VKLYSKFPDV…LLRITKAAIV (157 aa). The active-site Cysteine sulfenic acid (-SOH) intermediate is C46. Residue R121 participates in substrate binding.

It belongs to the peroxiredoxin family. Prx6 subfamily. As to quaternary structure, homodecamer. Pentamer of dimers that assemble into a ring structure.

It localises to the cytoplasm. It carries out the reaction a hydroperoxide + [thioredoxin]-dithiol = an alcohol + [thioredoxin]-disulfide + H2O. Thiol-specific peroxidase that catalyzes the reduction of hydrogen peroxide and organic hydroperoxides to water and alcohols, respectively. Plays a role in cell protection against oxidative stress by detoxifying peroxides. The polypeptide is Peroxiredoxin 1 (Sulfurisphaera tokodaii (strain DSM 16993 / JCM 10545 / NBRC 100140 / 7) (Sulfolobus tokodaii)).